The sequence spans 144 residues: Bradykinin-potentiating and C-type natriuretic peptides isoform 2 (144 aa).

Positions 1-23 (MVLSRLAASGLLLLALLALSVDG) are cleaved as a signal peptide. A propeptide spanning residues 24–30 (KPVQQWA) is cleaved from the precursor. At Gln31 the chain carries Pyrrolidone carboxylic acid. The propeptide occupies 41-47 (LLVQQWA). Gln48 is subject to Pyrrolidone carboxylic acid. The propeptide occupies 61 to 67 (LTVQQWA). Gln68 bears the Pyrrolidone carboxylic acid mark. Positions 78–84 (LTVQQWA) are excised as a propeptide. The segment at 81–110 (QQWAQGRPPGPPIPPLTVQQWAQARPPHPP) is disordered. Residue Gln85 is modified to Pyrrolidone carboxylic acid. The propeptide occupies 96–102 (LTVQQWA). Gln103 bears the Pyrrolidone carboxylic acid mark. A propeptide spanning residues 114–116 (APL) is cleaved from the precursor. Gln117 is modified (pyrrolidone carboxylic acid). Val122 is a propeptide. Gln123 carries the post-translational modification Pyrrolidone carboxylic acid. The propeptide occupies 128 to 144 (VQKWAPVQKWAPLLQPT).

This sequence in the N-terminal section; belongs to the bradykinin-potentiating peptide family. As to expression, expressed by venom gland.

It is found in the secreted. The protein localises to the cytoplasm. Its subcellular location is the cytosol. Functionally, peptide with several activities. It inhibits the activity of the angiotensin-converting enzyme (ACE) by a preferential interaction with its C-domain. It evokes transient hypotension (-14 mmHg) similar to that evoked by 0.5 ug of bradykinin, when injected alone into rats. It has a high bradykinin-potentiating effect (120%), when 60 nmol of BPP-10c are coinjected with 0.5 ug of bradykinin into rats. Does not affect angiotensin-1 pressor effects. Shows potent and long-lasting antihypertensive activity as well as a reduction of the heart rate. It also binds and dose-dependently promotes the activation of cytosolic argininosuccinate synthase (ASS1), an enzyme that catalyzes the conversion of citrulline, L-aspartate and ATP to argininosuccinate, AMP and pyrophosphate. It also enhances ASS1-dependent arginine production in HEK 293 cells, as well as in spontaneous hypertensive rat (SHR) and Wistar rat plasma. In addition, it induces the production of nitric-oxide (NO) by HUVEC cells via the endothelial nitric-oxide synthase (NOS3), which use arginine as a substrate and produce NO. It has been shown to be internalized by ASS1-expressing endothelial (HUVEC) and kidney (HEK 293) cells, and is detected homogenously distributed within the cell cytoplasm for up to 2 hours. Acts as indirect hypotensive agent. Increases leukocyte rolling flux and adhesion by five-fold in post-capillary venules, without any increments in vasodilation of arterioles. Its function is as follows. Acts as indirect hypotensive agent. Potently induces vasodilation of arterioles, with only a small increase in leukocyte rolling flux. The polypeptide is Bradykinin-potentiating and C-type natriuretic peptides isoform 2 (Bothrops jararacussu (Jararacussu)).